Here is a 129-residue protein sequence, read N- to C-terminus: Small ribosomal subunit protein uS11 (129 aa).

Belongs to the universal ribosomal protein uS11 family. In terms of assembly, part of the 30S ribosomal subunit. Interacts with proteins S7 and S18. Binds to IF-3.

Functionally, located on the platform of the 30S subunit, it bridges several disparate RNA helices of the 16S rRNA. Forms part of the Shine-Dalgarno cleft in the 70S ribosome. This is Small ribosomal subunit protein uS11 from Methylobacillus flagellatus (strain ATCC 51484 / DSM 6875 / VKM B-1610 / KT).